The following is a 313-amino-acid chain: Formimidoylglutamase (313 aa).

Residues H130, D155, H157, D159, D241, and D243 each coordinate Mn(2+).

It belongs to the arginase family. Mn(2+) is required as a cofactor.

The catalysed reaction is N-formimidoyl-L-glutamate + H2O = formamide + L-glutamate. Its pathway is amino-acid degradation; L-histidine degradation into L-glutamate; L-glutamate from N-formimidoyl-L-glutamate (hydrolase route): step 1/1. Catalyzes the conversion of N-formimidoyl-L-glutamate to L-glutamate and formamide. The protein is Formimidoylglutamase of Salmonella heidelberg (strain SL476).